The following is a 348-amino-acid chain: Papaya proteinase 4 (348 aa).

Residues 1-18 form the signal peptide; sequence MAIICSFSKLLFVAICLF. A propeptide spans 19-132 (activation peptide); the sequence is GHMSLSYCDF…EEFVNEDIVD (114 aa). Intrachain disulfides connect cysteine 154–cysteine 195, cysteine 188–cysteine 227, and cysteine 285–cysteine 336. Cysteine 157 is a catalytic residue. Catalysis depends on residues histidine 291 and asparagine 311.

This sequence belongs to the peptidase C1 family.

It catalyses the reaction Preferential cleavage: Gly-|-Xaa, in proteins and in small molecule substrates.. Its activity is regulated as follows. Not inhibited by cystatin. Its function is as follows. Thiol protease with a substrate specificity very different from the other thiol proteases. The polypeptide is Papaya proteinase 4 (Carica papaya (Papaya)).